The sequence spans 246 residues: 3'(2'),5'-bisphosphate nucleotidase CysQ (246 aa).

Mg(2+) contacts are provided by E64, D83, L85, D86, and D205. Residue E64 participates in substrate binding. Residues 85–88 (LDGT) and D205 contribute to the substrate site.

This sequence belongs to the inositol monophosphatase superfamily. CysQ family. It depends on Mg(2+) as a cofactor.

It localises to the cell inner membrane. The enzyme catalyses adenosine 3',5'-bisphosphate + H2O = AMP + phosphate. Its function is as follows. Converts adenosine-3',5'-bisphosphate (PAP) to AMP. This is 3'(2'),5'-bisphosphate nucleotidase CysQ from Escherichia coli O6:H1 (strain CFT073 / ATCC 700928 / UPEC).